The following is a 101-amino-acid chain: AFA-III adhesin operon regulatory protein (101 aa).

In terms of biological role, regulates the transcription of genes involved in the biosynthesis of afimbrial adhesin-III. This Escherichia coli protein is AFA-III adhesin operon regulatory protein (afaA).